Here is a 539-residue protein sequence, read N- to C-terminus: T-complex protein 1 subunit delta (539 aa).

Residues 1–28 form a disordered region; it reads MPENVASRSGPPAAGPGNRGKGAYQDRD. Omega-N-methylarginine is present on arginine 19. Lysine 21 bears the N6-acetyllysine mark. The residue at position 36 (serine 36) is a Phosphoserine. ADP is bound at residue glycine 53. Glycine 53 serves as a coordination point for ATP. Aspartate 104 lines the Mg(2+) pocket. 7 residues coordinate ADP: glycine 105, threonine 106, threonine 107, serine 108, asparagine 172, serine 173, and lysine 174. Glycine 105 and threonine 106 together coordinate ATP. Lysine 174 is an ATP binding site. 2 positions are modified to phosphoserine: serine 184 and serine 202. 4 positions are modified to N6-acetyllysine: lysine 288, lysine 302, lysine 319, and lysine 326. Glycine 425 is an ADP binding site. Serine 444 carries the post-translational modification Phosphoserine. Residue glutamine 510 participates in ADP binding.

This sequence belongs to the TCP-1 chaperonin family. As to quaternary structure, component of the chaperonin-containing T-complex (TRiC), a hexadecamer composed of two identical back-to-back stacked rings enclosing a protein folding chamber. Each ring is made up of eight different subunits: TCP1/CCT1, CCT2, CCT3, CCT4, CCT5, CCT6A/CCT6, CCT7, CCT8. Interacts with PACRG. Interacts with DNAAF4. Interacts with DLEC1.

It is found in the cytoplasm. The protein resides in the melanosome. The protein localises to the cytoskeleton. Its subcellular location is the microtubule organizing center. It localises to the centrosome. It is found in the cilium basal body. It carries out the reaction ATP + H2O = ADP + phosphate + H(+). Component of the chaperonin-containing T-complex (TRiC), a molecular chaperone complex that assists the folding of actin, tubulin and other proteins upon ATP hydrolysis. The TRiC complex mediates the folding of WRAP53/TCAB1, thereby regulating telomere maintenance. As part of the TRiC complex may play a role in the assembly of BBSome, a complex involved in ciliogenesis regulating transports vesicles to the cilia. This chain is T-complex protein 1 subunit delta (Cct4), found in Rattus norvegicus (Rat).